The sequence spans 488 residues: GTPase Der (488 aa).

The EngA-type G 1 domain occupies 3-166; that stretch reads PVVALVGRPN…YALAPYAEAL (164 aa). Residues 9–16, 56–60, and 118–121 each bind GTP; these read GRPNVGKS, DTGGI, and NKVD. The disordered stretch occupies residues 168–191; it reads LNRDGDEDEDEEEREYSEEEAEAE. Acidic residues predominate over residues 172–189; sequence GDEDEDEEEREYSEEEAE. Residues 200-373 form the EngA-type G 2 domain; the sequence is IKMAIIGKPN…SVQEAYDSAT (174 aa). GTP-binding positions include 206 to 213, 253 to 257, and 318 to 321; these read GKPNVGKS, DTAGV, and NKWD. The KH-like domain maps to 374-458; it reads RRVSTSMLTR…PIQIRFQDSA (85 aa).

This sequence belongs to the TRAFAC class TrmE-Era-EngA-EngB-Septin-like GTPase superfamily. EngA (Der) GTPase family. In terms of assembly, associates with the 50S ribosomal subunit.

In terms of biological role, GTPase that plays an essential role in the late steps of ribosome biogenesis. The chain is GTPase Der from Shewanella sediminis (strain HAW-EB3).